Reading from the N-terminus, the 100-residue chain is Putative septation protein SpoVG (100 aa).

This sequence belongs to the SpoVG family.

In terms of biological role, could be involved in septation. This is Putative septation protein SpoVG from Clostridium novyi (strain NT).